Consider the following 55-residue polypeptide: Large ribosomal subunit protein bL33 (55 aa).

It belongs to the bacterial ribosomal protein bL33 family.

In Brucella abortus (strain S19), this protein is Large ribosomal subunit protein bL33.